The sequence spans 310 residues: Cell division protein FtsQ (310 aa).

The segment at 1–57 (MSEPENTAEDKDAEAAISADAVESETTADGGENPAEGESAEGPRMRARRERMERREA) is disordered. Residues 1–95 (MSEPENTAED…AGRGKVQGLQ (95 aa)) lie on the Cytoplasmic side of the membrane. Residues 96–116 (TLLLVVLLALIAVGLGSILYF) form a helical membrane-spanning segment. The Extracellular segment spans residues 117-310 (TPLMSVRQTV…VSSPDLPTVK (194 aa)). The POTRA domain maps to 120–188 (MSVRQTVVTG…STLRVTIVER (69 aa)).

This sequence belongs to the FtsQ/DivIB family. FtsQ subfamily.

The protein localises to the cell membrane. Its function is as follows. Essential cell division protein. The polypeptide is Cell division protein FtsQ (Mycobacteroides abscessus (strain ATCC 19977 / DSM 44196 / CCUG 20993 / CIP 104536 / JCM 13569 / NCTC 13031 / TMC 1543 / L948) (Mycobacterium abscessus)).